The chain runs to 127 residues: Large ribosomal subunit protein bL17 (127 aa).

It belongs to the bacterial ribosomal protein bL17 family. In terms of assembly, part of the 50S ribosomal subunit. Contacts protein L32.

The protein is Large ribosomal subunit protein bL17 of Vibrio vulnificus (strain CMCP6).